The sequence spans 582 residues: Cryptochrome-2 (582 aa).

In terms of domain architecture, Photolyase/cryptochrome alpha/beta spans 12 to 141 (CRSVHWFRRG…EVVIENSHTL (130 aa)). Residues S261, Q298, H364, and 396–398 (DAD) each bind FAD. Residues 521–559 (GPVTDSAPGQGSSTSTAVRLPQSDQASPKRKHEGAEELC) form a disordered region. Polar residues predominate over residues 527 to 546 (APGQGSSTSTAVRLPQSDQA).

It belongs to the DNA photolyase class-1 family. In terms of assembly, component of the circadian core oscillator, which includes the CRY proteins, CLOCK or NPAS2, BMAL1 or BMAL2, CSNK1E, and the PER proteins. FAD serves as cofactor. Requires (6R)-5,10-methylene-5,6,7,8-tetrahydrofolate as cofactor. As to expression, expressed in the pineal gland.

It is found in the cytoplasm. The protein localises to the nucleus. Transcriptional repressor which forms a core component of the circadian clock. The circadian clock, an internal time-keeping system, regulates various physiological processes through the generation of approximately 24 hour circadian rhythms in gene expression, which are translated into rhythms in metabolism and behavior. It is derived from the Latin roots 'circa' (about) and 'diem' (day) and acts as an important regulator of a wide array of physiological functions including metabolism, sleep, body temperature, blood pressure, endocrine, immune, cardiovascular, and renal function. Consists of two major components: the central clock, residing in the suprachiasmatic nucleus (SCN) of the brain, and the peripheral clocks that are present in nearly every tissue and organ system. Both the central and peripheral clocks can be reset by environmental cues, also known as Zeitgebers (German for 'timegivers'). The predominant Zeitgeber for the central clock is light, which is sensed by retina and signals directly to the SCN. The central clock entrains the peripheral clocks through neuronal and hormonal signals, body temperature and feeding-related cues, aligning all clocks with the external light/dark cycle. Circadian rhythms allow an organism to achieve temporal homeostasis with its environment at the molecular level by regulating gene expression to create a peak of protein expression once every 24 hours to control when a particular physiological process is most active with respect to the solar day. Transcription and translation of core clock components (CLOCK, NPAS2, BMAL1, BMAL2, PER1, PER2, PER3, CRY1 and CRY2) plays a critical role in rhythm generation, whereas delays imposed by post-translational modifications (PTMs) are important for determining the period (tau) of the rhythms (tau refers to the period of a rhythm and is the length, in time, of one complete cycle). A diurnal rhythm is synchronized with the day/night cycle, while the ultradian and infradian rhythms have a period shorter and longer than 24 hours, respectively. Disruptions in the circadian rhythms contribute to the pathology of cardiovascular diseases, cancer, metabolic syndromes and aging. A transcription/translation feedback loop (TTFL) forms the core of the molecular circadian clock mechanism. Transcription factors, CLOCK or NPAS2 and BMAL1 or BMAL2, form the positive limb of the feedback loop, act in the form of a heterodimer and activate the transcription of core clock genes and clock-controlled genes (involved in key metabolic processes), harboring E-box elements (5'-CACGTG-3') within their promoters. The core clock genes: PER1/2/3 and CRY1/2 which are transcriptional repressors form the negative limb of the feedback loop and interact with the CLOCK|NPAS2-BMAL1|BMAL2 heterodimer inhibiting its activity and thereby negatively regulating their own expression. This heterodimer also activates nuclear receptors NR1D1/2, RORA/B/G, which form a second feedback loop and which activate and repress BMAL1 transcription, respectively. CRY1 and CRY2 have redundant functions but also differential and selective contributions at least in defining the pace of the SCN circadian clock and its circadian transcriptional outputs. Less potent transcriptional repressor in cerebellum and liver than CRY1, though less effective in lengthening the period of the SCN oscillator. Seems to play a critical role in tuning SCN circadian period by opposing the action of CRY1. With CRY1, dispensable for circadian rhythm generation but necessary for the development of intercellular networks for rhythm synchrony. Represses CLOCK-BMAL1-mediated transcriptional activation. The polypeptide is Cryptochrome-2 (CRY2) (Gallus gallus (Chicken)).